A 509-amino-acid chain; its full sequence is Maturase K (509 aa).

It belongs to the intron maturase 2 family. MatK subfamily.

The protein localises to the plastid. It localises to the chloroplast. In terms of biological role, usually encoded in the trnK tRNA gene intron. Probably assists in splicing its own and other chloroplast group II introns. The protein is Maturase K of Nymphaea odorata (White water lily).